The chain runs to 339 residues: Ketol-acid reductoisomerase (NADP(+)) (339 aa).

In terms of domain architecture, KARI N-terminal Rossmann spans 1-182; the sequence is MRVYYDRDAD…GGGRAGIIET (182 aa). Residues 24 to 27, Arg-48, Ser-51, Ser-53, and 83 to 86 contribute to the NADP(+) site; these read YGSQ and DELQ. The active site involves His-108. Position 134 (Gly-134) interacts with NADP(+). Residues 183–328 form the KARI C-terminal knotted domain; the sequence is TFKEECETDL…EKLREMMPWI (146 aa). Positions 191, 195, 227, and 231 each coordinate Mg(2+). Ser-252 is a binding site for substrate.

The protein belongs to the ketol-acid reductoisomerase family. It depends on Mg(2+) as a cofactor.

The catalysed reaction is (2R)-2,3-dihydroxy-3-methylbutanoate + NADP(+) = (2S)-2-acetolactate + NADPH + H(+). It catalyses the reaction (2R,3R)-2,3-dihydroxy-3-methylpentanoate + NADP(+) = (S)-2-ethyl-2-hydroxy-3-oxobutanoate + NADPH + H(+). The protein operates within amino-acid biosynthesis; L-isoleucine biosynthesis; L-isoleucine from 2-oxobutanoate: step 2/4. Its pathway is amino-acid biosynthesis; L-valine biosynthesis; L-valine from pyruvate: step 2/4. In terms of biological role, involved in the biosynthesis of branched-chain amino acids (BCAA). Catalyzes an alkyl-migration followed by a ketol-acid reduction of (S)-2-acetolactate (S2AL) to yield (R)-2,3-dihydroxy-isovalerate. In the isomerase reaction, S2AL is rearranged via a Mg-dependent methyl migration to produce 3-hydroxy-3-methyl-2-ketobutyrate (HMKB). In the reductase reaction, this 2-ketoacid undergoes a metal-dependent reduction by NADPH to yield (R)-2,3-dihydroxy-isovalerate. The protein is Ketol-acid reductoisomerase (NADP(+)) of Azorhizobium caulinodans (strain ATCC 43989 / DSM 5975 / JCM 20966 / LMG 6465 / NBRC 14845 / NCIMB 13405 / ORS 571).